We begin with the raw amino-acid sequence, 145 residues long: D-aminoacyl-tRNA deacylase (145 aa).

Residues 137–138 (GP) carry the Gly-cisPro motif, important for rejection of L-amino acids motif.

This sequence belongs to the DTD family. As to quaternary structure, homodimer.

The protein resides in the cytoplasm. It carries out the reaction glycyl-tRNA(Ala) + H2O = tRNA(Ala) + glycine + H(+). It catalyses the reaction a D-aminoacyl-tRNA + H2O = a tRNA + a D-alpha-amino acid + H(+). Its function is as follows. An aminoacyl-tRNA editing enzyme that deacylates mischarged D-aminoacyl-tRNAs. Also deacylates mischarged glycyl-tRNA(Ala), protecting cells against glycine mischarging by AlaRS. Acts via tRNA-based rather than protein-based catalysis; rejects L-amino acids rather than detecting D-amino acids in the active site. By recycling D-aminoacyl-tRNA to D-amino acids and free tRNA molecules, this enzyme counteracts the toxicity associated with the formation of D-aminoacyl-tRNA entities in vivo and helps enforce protein L-homochirality. The chain is D-aminoacyl-tRNA deacylase from Chromohalobacter salexigens (strain ATCC BAA-138 / DSM 3043 / CIP 106854 / NCIMB 13768 / 1H11).